We begin with the raw amino-acid sequence, 89 residues long: Small ribosomal subunit protein uS15 (89 aa).

The interval 1–24 (MALTQTKKQELISQYQAHETDTGS) is disordered.

Belongs to the universal ribosomal protein uS15 family. In terms of assembly, part of the 30S ribosomal subunit. Forms a bridge to the 50S subunit in the 70S ribosome, contacting the 23S rRNA.

Functionally, one of the primary rRNA binding proteins, it binds directly to 16S rRNA where it helps nucleate assembly of the platform of the 30S subunit by binding and bridging several RNA helices of the 16S rRNA. Its function is as follows. Forms an intersubunit bridge (bridge B4) with the 23S rRNA of the 50S subunit in the ribosome. The protein is Small ribosomal subunit protein uS15 of Microcystis aeruginosa (strain NIES-843 / IAM M-2473).